The chain runs to 39 residues: Photosystem II reaction center protein L (39 aa).

Residues 18-38 (SLYLGLLSVLVLGILFSSYFF) form a helical membrane-spanning segment.

This sequence belongs to the PsbL family. As to quaternary structure, PSII is composed of 1 copy each of membrane proteins PsbA, PsbB, PsbC, PsbD, PsbE, PsbF, PsbH, PsbI, PsbJ, PsbK, PsbL, PsbM, PsbT, PsbX, PsbY, Psb30/Ycf12, peripheral proteins PsbO, CyanoQ (PsbQ), PsbU, PsbV and a large number of cofactors. It forms dimeric complexes.

Its subcellular location is the cellular thylakoid membrane. Its function is as follows. One of the components of the core complex of photosystem II (PSII). PSII is a light-driven water:plastoquinone oxidoreductase that uses light energy to abstract electrons from H(2)O, generating O(2) and a proton gradient subsequently used for ATP formation. It consists of a core antenna complex that captures photons, and an electron transfer chain that converts photonic excitation into a charge separation. This subunit is found at the monomer-monomer interface and is required for correct PSII assembly and/or dimerization. The chain is Photosystem II reaction center protein L from Prochlorococcus marinus subsp. pastoris (strain CCMP1986 / NIES-2087 / MED4).